A 59-amino-acid polypeptide reads, in one-letter code: Large ribosomal subunit protein uL30 (59 aa).

The protein belongs to the universal ribosomal protein uL30 family. In terms of assembly, part of the 50S ribosomal subunit.

This is Large ribosomal subunit protein uL30 from Geobacter metallireducens (strain ATCC 53774 / DSM 7210 / GS-15).